Here is a 60-residue protein sequence, read N- to C-terminus: Large ribosomal subunit protein bL32 (60 aa).

This sequence belongs to the bacterial ribosomal protein bL32 family.

The chain is Large ribosomal subunit protein bL32 from Hydrogenobaculum sp. (strain Y04AAS1).